We begin with the raw amino-acid sequence, 319 residues long: Ribosomal large subunit pseudouridine synthase C (319 aa).

One can recognise an S4 RNA-binding domain in the interval 20 to 83; sequence QRIDNFLRTQ…AEREEEAVSP (64 aa). Asp144 is an active-site residue.

The protein belongs to the pseudouridine synthase RluA family.

The enzyme catalyses uridine(955/2504/2580) in 23S rRNA = pseudouridine(955/2504/2580) in 23S rRNA. Its function is as follows. Responsible for synthesis of pseudouridine from uracil at positions 955, 2504 and 2580 in 23S ribosomal RNA. The polypeptide is Ribosomal large subunit pseudouridine synthase C (Escherichia coli (strain K12)).